The sequence spans 32 residues: MTIISDSQIVVALISALVTGILALRLGRELYR.

The chain crosses the membrane as a helical span at residues 10–27; it reads VVALISALVTGILALRLG.

It belongs to the PsaM family.

The protein localises to the plastid. It localises to the chloroplast thylakoid membrane. This is Photosystem I reaction center subunit XII from Zygnema circumcarinatum (Green alga).